Here is a 936-residue protein sequence, read N- to C-terminus: Lipoxygenase 2.1, chloroplastic (936 aa).

The segment at 1-69 is disordered; that stretch reads MLTATKPLVG…LSADSNGAAV (69 aa). Residues 47–59 are compositionally biased toward low complexity; sequence STSTSTTTTTTTT. The 130-residue stretch at 88-217 folds into the PLAT domain; it reads MKATVTVHMS…CTPDKRVFFP (130 aa). Positions 220-936 constitute a Lipoxygenase domain; that stretch reads SYLPSQTPKG…EMGIPNSISI (717 aa). The segment at 264–308 is disordered; the sequence is LGNPDDDNNPTTRPVLGGKEHPYPRRCRTGRPRSKKDPFSEERSH. Residues 287–297 are compositionally biased toward basic residues; the sequence is PRRCRTGRPRS. Over residues 298–308 the composition is skewed to basic and acidic residues; sequence KKDPFSEERSH. Fe cation contacts are provided by His587, His592, His777, Asn781, and Ile936.

Belongs to the lipoxygenase family. The cofactor is Fe cation. The N-terminus is blocked.

Its subcellular location is the plastid. It localises to the chloroplast. It catalyses the reaction (9Z,12Z)-octadecadienoate + O2 = (13S)-hydroperoxy-(9Z,11E)-octadecadienoate. It carries out the reaction (9Z,12Z,15Z)-octadecatrienoate + O2 = (13S)-hydroperoxy-(9Z,11E,15Z)-octadecatrienoate. It functions in the pathway lipid metabolism; oxylipin biosynthesis. Its function is as follows. Plant lipoxygenase may be involved in a number of diverse aspects of plant physiology including growth and development, pest resistance, and senescence or responses to wounding. This enzyme is possibly involved in jasmonic acid synthesis. It exhibits linoleate 13-lipoxygenase and arachidonate 15-lipoxygenase activity. This Hordeum vulgare (Barley) protein is Lipoxygenase 2.1, chloroplastic (LOX2.1).